Consider the following 563-residue polypeptide: Cytidine monophosphate-N-acetylneuraminic acid hydroxylase (563 aa).

The 99-residue stretch at 10–108 folds into the Rieske domain; the sequence is LSPAETANLK…VEMDGNDGLF (99 aa). Positions 50, 52, 71, and 74 each coordinate [2Fe-2S] cluster.

It belongs to the CMP-Neu5Ac hydroxylase family. [2Fe-2S] cluster is required as a cofactor.

The protein localises to the cytoplasm. It catalyses the reaction CMP-N-acetyl-beta-neuraminate + 2 Fe(II)-[cytochrome b5] + O2 + 2 H(+) = CMP-N-glycoloyl-beta-neuraminate + 2 Fe(III)-[cytochrome b5] + H2O. It functions in the pathway amino-sugar metabolism; N-acetylneuraminate metabolism. Sialic acids are components of carbohydrate chains of glycoconjugates and are involved in cell-cell recognition and cell-pathogen interactions. Catalyzes the conversion of CMP-N-acetylneuraminic acid (CMP-Neu5Ac) into its hydroxylated derivative CMP-N-glycolylneuraminic acid (CMP-Neu5Gc), a sialic acid abundantly expressed at the surface of many cells. The chain is Cytidine monophosphate-N-acetylneuraminic acid hydroxylase (CMAH) from Cricetulus griseus (Chinese hamster).